We begin with the raw amino-acid sequence, 424 residues long: UDP-N-acetylglucosamine 1-carboxyvinyltransferase (424 aa).

Position 22 to 23 (22 to 23 (KN)) interacts with phosphoenolpyruvate. Residue Arg-93 coordinates UDP-N-acetyl-alpha-D-glucosamine. Residue Cys-117 is the Proton donor of the active site. Cys-117 is modified (2-(S-cysteinyl)pyruvic acid O-phosphothioketal). Residues 122 to 126 (RPVDL), 164 to 166 (SVG), Asp-307, and Ile-329 contribute to the UDP-N-acetyl-alpha-D-glucosamine site.

The protein belongs to the EPSP synthase family. MurA subfamily.

It is found in the cytoplasm. It catalyses the reaction phosphoenolpyruvate + UDP-N-acetyl-alpha-D-glucosamine = UDP-N-acetyl-3-O-(1-carboxyvinyl)-alpha-D-glucosamine + phosphate. Its pathway is cell wall biogenesis; peptidoglycan biosynthesis. In terms of biological role, cell wall formation. Adds enolpyruvyl to UDP-N-acetylglucosamine. The chain is UDP-N-acetylglucosamine 1-carboxyvinyltransferase from Haemophilus influenzae (strain ATCC 51907 / DSM 11121 / KW20 / Rd).